Consider the following 207-residue polypeptide: Large ribosomal subunit protein uL4 (207 aa).

Basic and acidic residues predominate over residues 44–58 (RAPTRATRERSDVAR). The disordered stretch occupies residues 44–82 (RAPTRATRERSDVARSGKKFGRQKGGGTARHGDRRSPIF).

The protein belongs to the universal ribosomal protein uL4 family. In terms of assembly, part of the 50S ribosomal subunit.

Functionally, one of the primary rRNA binding proteins, this protein initially binds near the 5'-end of the 23S rRNA. It is important during the early stages of 50S assembly. It makes multiple contacts with different domains of the 23S rRNA in the assembled 50S subunit and ribosome. Forms part of the polypeptide exit tunnel. In Zymomonas mobilis subsp. mobilis (strain ATCC 31821 / ZM4 / CP4), this protein is Large ribosomal subunit protein uL4.